A 205-amino-acid chain; its full sequence is Outer-membrane lipoprotein carrier protein (205 aa).

A signal peptide spans 1 to 22 (MKKTTLKFAALTLLGLSNLALA).

This sequence belongs to the LolA family. As to quaternary structure, monomer.

The protein localises to the periplasm. Its function is as follows. Participates in the translocation of lipoproteins from the inner membrane to the outer membrane. Only forms a complex with a lipoprotein if the residue after the N-terminal Cys is not an aspartate (The Asp acts as a targeting signal to indicate that the lipoprotein should stay in the inner membrane). The sequence is that of Outer-membrane lipoprotein carrier protein from Haemophilus influenzae (strain PittEE).